The primary structure comprises 115 residues: UPF0738 protein SERP0585 (115 aa).

It belongs to the UPF0738 family.

The sequence is that of UPF0738 protein SERP0585 from Staphylococcus epidermidis (strain ATCC 35984 / DSM 28319 / BCRC 17069 / CCUG 31568 / BM 3577 / RP62A).